The following is a 375-amino-acid chain: MSLEAFSPSRALSIGVELELQLVGTHDYDLVGAADDMLRLTAGLDLPGDIKPEMTDSMIEISTGVCDNHAMVLTQLDGLRAALVDIARRLNVGICGGGTHGFQDWGERRIFDNPRFHYLHELYGYLAKQFTVFGQHVHIGCPGPDAALYLVHGLSRYIPHLIALSASSPFLQGQDTGFQSSRLNAVFAFPLSGRAPFALSWSDFGAYFDKMSATGVVSSMKDFYWDIRPKPEYGTVEVRVMDTPLTVERAAALAAYIQALARYLMVERPIQPREDDYLVYTFNRFQACRFGYAGTYVDPENHTHCSIAEALEASFTRIEQHAIELGAEAAIGRLRADVASGRNDAWWLRGQLGPQVTLPEVVMAQCRRWMNGEGM.

The protein belongs to the glutamate--cysteine ligase type 2 family. YbdK subfamily.

The enzyme catalyses L-cysteine + L-glutamate + ATP = gamma-L-glutamyl-L-cysteine + ADP + phosphate + H(+). ATP-dependent carboxylate-amine ligase which exhibits weak glutamate--cysteine ligase activity. This Azoarcus sp. (strain BH72) protein is Putative glutamate--cysteine ligase 2.